Consider the following 620-residue polypeptide: Chaperone protein HscA homolog (620 aa).

This sequence belongs to the heat shock protein 70 family.

Functionally, chaperone involved in the maturation of iron-sulfur cluster-containing proteins. Has a low intrinsic ATPase activity which is markedly stimulated by HscB. The sequence is that of Chaperone protein HscA homolog from Shewanella sp. (strain MR-4).